Consider the following 315-residue polypeptide: Ribosomal RNA small subunit methyltransferase H (315 aa).

S-adenosyl-L-methionine is bound by residues 37-39 (AGH), D57, Y84, D105, and Q112.

This sequence belongs to the methyltransferase superfamily. RsmH family.

It is found in the cytoplasm. It carries out the reaction cytidine(1402) in 16S rRNA + S-adenosyl-L-methionine = N(4)-methylcytidine(1402) in 16S rRNA + S-adenosyl-L-homocysteine + H(+). In terms of biological role, specifically methylates the N4 position of cytidine in position 1402 (C1402) of 16S rRNA. The chain is Ribosomal RNA small subunit methyltransferase H from Lachnospira eligens (strain ATCC 27750 / DSM 3376 / VPI C15-48 / C15-B4) (Eubacterium eligens).